We begin with the raw amino-acid sequence, 281 residues long: Putative rRNA methyltransferase YqxC (281 aa).

The S4 RNA-binding domain occupies 6–67 (ERLDVLLVER…NPLRYVSRGG (62 aa)).

Belongs to the TlyA family.

This chain is Putative rRNA methyltransferase YqxC (yqxC), found in Bacillus subtilis (strain 168).